Consider the following 96-residue polypeptide: uncharacterized protein (96 aa).

A helical membrane pass occupies residues 13–35 (PVVRYVVALLHWLLWRVVVIIAI).

The protein localises to the membrane. This is an uncharacterized protein from Archaeoglobus fulgidus (strain ATCC 49558 / DSM 4304 / JCM 9628 / NBRC 100126 / VC-16).